A 533-amino-acid polypeptide reads, in one-letter code: Atypical kinase COQ8B, mitochondrial (533 aa).

The helical transmembrane segment at 93–109 threads the bilayer; it reads LASFGGLAVGLGLGALA. Residues 156-159 carry the KxGQ motif motif; sequence KIGQ. The Protein kinase domain maps to 192 to 424; that stretch reads MMRVLEEELG…DRVLQKSQDL (233 aa). The AAAS motif motif lies at 217–220; it reads AAAS. ATP is bound by residues Ser-220, Lys-238, and 325-328; that span reads MELA. Catalysis depends on Asp-368, which acts as the Proton acceptor. The ATP site is built by Asn-373 and Asp-387.

This sequence belongs to the protein kinase superfamily. ADCK protein kinase family. As to quaternary structure, homodimer; homodimerizes via its transmembrane region. Interacts with COQ6 and COQ7. Interacts with the multi-subunit COQ enzyme complex, composed of at least COQ3, COQ4, COQ5, COQ6, COQ7 and COQ9.

Its subcellular location is the mitochondrion membrane. The protein resides in the cytoplasm. The protein localises to the cytosol. It is found in the cell membrane. The protein operates within cofactor biosynthesis; ubiquinone biosynthesis. Atypical kinase involved in the biosynthesis of coenzyme Q, also named ubiquinone, an essential lipid-soluble electron transporter for aerobic cellular respiration. Its substrate specificity is still unclear: may act as a protein kinase that mediates phosphorylation of COQ3. According to other reports, acts as a small molecule kinase, possibly a lipid kinase that phosphorylates a prenyl lipid in the ubiquinone biosynthesis pathway, as suggested by its ability to bind coenzyme Q lipid intermediates. However, the small molecule kinase activity was not confirmed by another publication. Required for podocyte migration. The sequence is that of Atypical kinase COQ8B, mitochondrial from Mus musculus (Mouse).